A 493-amino-acid polypeptide reads, in one-letter code: UDP-N-acetylmuramoyl-L-alanyl-D-glutamate--2,6-diaminopimelate ligase (493 aa).

Residues leucine 30 and serine 32 each coordinate UDP-N-acetyl-alpha-D-muramoyl-L-alanyl-D-glutamate. Glycine 117 to threonine 123 lines the ATP pocket. UDP-N-acetyl-alpha-D-muramoyl-L-alanyl-D-glutamate-binding positions include asparagine 158, threonine 159 to threonine 160, serine 186, glutamine 192, and arginine 194. The residue at position 226 (lysine 226) is an N6-carboxylysine. Meso-2,6-diaminopimelate is bound by residues arginine 388, aspartate 412–arginine 415, glycine 463, and glutamate 467. The short motif at aspartate 412 to arginine 415 is the Meso-diaminopimelate recognition motif element.

Belongs to the MurCDEF family. MurE subfamily. The cofactor is Mg(2+). Carboxylation is probably crucial for Mg(2+) binding and, consequently, for the gamma-phosphate positioning of ATP.

The protein localises to the cytoplasm. It carries out the reaction UDP-N-acetyl-alpha-D-muramoyl-L-alanyl-D-glutamate + meso-2,6-diaminopimelate + ATP = UDP-N-acetyl-alpha-D-muramoyl-L-alanyl-gamma-D-glutamyl-meso-2,6-diaminopimelate + ADP + phosphate + H(+). Its pathway is cell wall biogenesis; peptidoglycan biosynthesis. In terms of biological role, catalyzes the addition of meso-diaminopimelic acid to the nucleotide precursor UDP-N-acetylmuramoyl-L-alanyl-D-glutamate (UMAG) in the biosynthesis of bacterial cell-wall peptidoglycan. The chain is UDP-N-acetylmuramoyl-L-alanyl-D-glutamate--2,6-diaminopimelate ligase from Vibrio vulnificus (strain YJ016).